We begin with the raw amino-acid sequence, 426 residues long: Tryptophan--tRNA ligase (426 aa).

The 'HIGH' region signature appears at Pro-66 to Asn-74. The 'KMSKS' region motif lies at Lys-314–Ser-318.

This sequence belongs to the class-I aminoacyl-tRNA synthetase family.

Its subcellular location is the cytoplasm. The catalysed reaction is tRNA(Trp) + L-tryptophan + ATP = L-tryptophyl-tRNA(Trp) + AMP + diphosphate + H(+). The protein is Tryptophan--tRNA ligase of Thermoplasma acidophilum (strain ATCC 25905 / DSM 1728 / JCM 9062 / NBRC 15155 / AMRC-C165).